The sequence spans 552 residues: HTH-type transcriptional regulator SgrR (552 aa).

The region spanning 1 to 116 is the HTH marR-type domain; sequence MPSGRLQQQF…LISHLGRSFR (116 aa). Residues 26–49 constitute a DNA-binding region (H-T-H motif); sequence LNELADLLNCSRRHMRTLLNTMQA. The interval 163–493 is solute-binding; it reads ELEADIAHHW…RDWQGDAAQW (331 aa).

Functionally, activates the small RNA gene sgrS under glucose-phosphate stress conditions as well as yfdZ. Represses its own transcription under both stress and non-stress conditions. Might act as a sensor of the intracellular accumulation of phosphoglucose by binding these molecules in its C-terminal solute-binding domain. The chain is HTH-type transcriptional regulator SgrR from Salmonella typhimurium (strain LT2 / SGSC1412 / ATCC 700720).